Here is a 1023-residue protein sequence, read N- to C-terminus: Exportin-T (1023 aa).

The protein belongs to the exportin family.

It is found in the nucleus. The protein localises to the cytoplasm. Its function is as follows. tRNA nucleus export receptor which facilitates tRNA translocation across the nuclear pore complex. Involved in pre-tRNA splicing, probably by affecting the interaction of pre-tRNA with splicing endonuclease. The chain is Exportin-T (los1) from Sclerotinia sclerotiorum (strain ATCC 18683 / 1980 / Ss-1) (White mold).